A 431-amino-acid polypeptide reads, in one-letter code: Enolase (431 aa).

Gln-163 serves as a coordination point for (2R)-2-phosphoglycerate. Catalysis depends on Glu-205, which acts as the Proton donor. Residues Asp-242, Glu-288, and Asp-315 each contribute to the Mg(2+) site. 4 residues coordinate (2R)-2-phosphoglycerate: Lys-340, Arg-369, Ser-370, and Lys-391. Lys-340 serves as the catalytic Proton acceptor.

Belongs to the enolase family. Requires Mg(2+) as cofactor.

Its subcellular location is the cytoplasm. It localises to the secreted. The protein resides in the cell surface. The catalysed reaction is (2R)-2-phosphoglycerate = phosphoenolpyruvate + H2O. Its pathway is carbohydrate degradation; glycolysis; pyruvate from D-glyceraldehyde 3-phosphate: step 4/5. Catalyzes the reversible conversion of 2-phosphoglycerate (2-PG) into phosphoenolpyruvate (PEP). It is essential for the degradation of carbohydrates via glycolysis. In Bacillus cereus (strain G9842), this protein is Enolase.